The following is a 672-amino-acid chain: Single-strand DNA endonuclease ASTE1 (672 aa).

An interaction with SHLD2 region spans residues 349-398; sequence TFLHTQVENMQRPNAHRISQPIRQIIYGLLLNGPSHAEDIAQNTLPSQLL.

It belongs to the asteroid family. Interacts with SHLD1, SHLD2, SHLD3, RIF1 and MAD2L2/REV7.

Structure-specific DNA endonuclease that specifically cleaves single-stranded DNA and 3' overhang DNA. Contributes to the control of DNA double-strand break repair choice by antagonizing BRCA1-dependent homologous recombination (HR) and promoting non-homologous end-joining (NHEJ). Recruited to the single-stranded DNA ends by SHLD2 and cleaves the 3' exposed DNA ends, therefore inhibiting DNA end resection (necessary for HR) and promoting DNA end protection (necessary for NHEJ). The polypeptide is Single-strand DNA endonuclease ASTE1 (Aste1) (Mus musculus (Mouse)).